The primary structure comprises 109 residues: Thioredoxin (109 aa).

The region spanning 2–109 (TNCIVELTDG…LKDFLNLYLK (108 aa)) is the Thioredoxin domain. A disulfide bridge connects residues Cys-33 and Cys-36.

Belongs to the thioredoxin family.

Functionally, participates in various redox reactions through the reversible oxidation of its active center dithiol to a disulfide and catalyzes dithiol-disulfide exchange reactions. In Buchnera aphidicola subsp. Baizongia pistaciae (strain Bp), this protein is Thioredoxin (trxA).